Here is a 278-residue protein sequence, read N- to C-terminus: Undecaprenyl-diphosphatase (278 aa).

Helical transmembrane passes span 44-64, 84-104, 112-132, 187-207, 224-244, and 254-274; these read FLEM…MTIY, WQLW…AVPL, FNFM…FIWI, SVAA…YSGL, VWIL…VIRF, and FTVF…YAFI.

Belongs to the UppP family.

The protein resides in the cell membrane. It catalyses the reaction di-trans,octa-cis-undecaprenyl diphosphate + H2O = di-trans,octa-cis-undecaprenyl phosphate + phosphate + H(+). In terms of biological role, catalyzes the dephosphorylation of undecaprenyl diphosphate (UPP). Confers resistance to bacitracin. The sequence is that of Undecaprenyl-diphosphatase from Streptococcus suis (strain 98HAH33).